Here is a 420-residue protein sequence, read N- to C-terminus: L-rhamnose isomerase (420 aa).

Mn(2+)-binding residues include histidine 264, aspartate 296, and aspartate 298.

Belongs to the rhamnose isomerase family. The cofactor is Mn(2+).

The protein localises to the cytoplasm. The enzyme catalyses L-rhamnopyranose = L-rhamnulose. It participates in carbohydrate degradation; L-rhamnose degradation; glycerone phosphate from L-rhamnose: step 1/3. Its function is as follows. Catalyzes the interconversion of L-rhamnose and L-rhamnulose. The sequence is that of L-rhamnose isomerase from Listeria monocytogenes serotype 4b (strain F2365).